The sequence spans 332 residues: MSLSLNDIKFPMHWNLDPNEFSYVEYVYREGLELGVWRPDNKRDQMAHTNVVSLSRYFWPNVDFDRLVMGGELMLWFFTFDDGLDAGIYDDQKSLELVRRMDIVFMDGILPEDPTGPEKVALRLRNKCLAMCGRRKDTFNRFITSCVQWVDSIIPFNKVKVGGQSPHIELYSFLRKINIGAYPCVTLTEVMLNHHLESYIWADPRWIKMNEDIAIVVTLINDLVSYEKEVNDNAGDLNPLFFFQRQNNVDLCDSYKQMVTLIDYYVDHYVQLEQGFLRTLAKYHNPLQEQEVNFMLDHLHYLITGSRMWSMQTPRYCSPTSPFIEMRKFREA.

The short motif at 81–86 (DDGLDA) is the DDxx(x)D/E motif element. The NDxxSxxxD/E motif motif lies at 221–229 (NDLVSYEKE).

The protein belongs to the terpene synthase family.

The catalysed reaction is (2E,6E)-farnesyl diphosphate = (2S,3R,6S,9S)-(-)-protoillud-7-ene + diphosphate. In terms of biological role, terpene synthase that converts its substrate farnesyl diphosphate (FPP) into the sesquiterpene protoillud-7-ene. The protein is Terpene synthase 1 of Acytostelium subglobosum (Slime mold).